We begin with the raw amino-acid sequence, 244 residues long: MLRIVKKLGIILFVSTISINSFAKSMYDDVDSASDYDSTPYYENEGSLVFKMRLGGVVSSAKQKGLPTPTSPQPVSVGEVAKNGYGGDASTTIFFNNYLATELSLGFNVLRTKYTSLAAVAHNYGVDNVKLGKHKPIYMIPATITGQFHIAPYGGIRPYIGIGYHGSYMLTQATGLKIRNGHGAVGQIGVDFYAKDDTLINIDVRQFFLNPKLEYKPNLVGNKTMTSKVKLNPLIVSIGIGFTF.

A signal peptide spans 1 to 23 (MLRIVKKLGIILFVSTISINSFA).

This sequence belongs to the OmpW/AlkL family.

The protein resides in the cell outer membrane. The chain is Putative outer membrane protein RC0105 from Rickettsia conorii (strain ATCC VR-613 / Malish 7).